Reading from the N-terminus, the 232-residue chain is Phosphoribosylaminoimidazole-succinocarboxamide synthase (232 aa).

Belongs to the SAICAR synthetase family.

The catalysed reaction is 5-amino-1-(5-phospho-D-ribosyl)imidazole-4-carboxylate + L-aspartate + ATP = (2S)-2-[5-amino-1-(5-phospho-beta-D-ribosyl)imidazole-4-carboxamido]succinate + ADP + phosphate + 2 H(+). The protein operates within purine metabolism; IMP biosynthesis via de novo pathway; 5-amino-1-(5-phospho-D-ribosyl)imidazole-4-carboxamide from 5-amino-1-(5-phospho-D-ribosyl)imidazole-4-carboxylate: step 1/2. The protein is Phosphoribosylaminoimidazole-succinocarboxamide synthase of Finegoldia magna (strain ATCC 29328 / DSM 20472 / WAL 2508) (Peptostreptococcus magnus).